Consider the following 159-residue polypeptide: 3-dehydroquinate dehydratase (159 aa).

Y31 functions as the Proton acceptor in the catalytic mechanism. The substrate site is built by N82, H88, and D95. H109 serves as the catalytic Proton donor. Substrate is bound by residues 110–111 (IS) and R120.

It belongs to the type-II 3-dehydroquinase family. As to quaternary structure, homododecamer.

It carries out the reaction 3-dehydroquinate = 3-dehydroshikimate + H2O. The protein operates within metabolic intermediate biosynthesis; chorismate biosynthesis; chorismate from D-erythrose 4-phosphate and phosphoenolpyruvate: step 3/7. Its function is as follows. Catalyzes a trans-dehydration via an enolate intermediate. The chain is 3-dehydroquinate dehydratase from Streptomyces avermitilis (strain ATCC 31267 / DSM 46492 / JCM 5070 / NBRC 14893 / NCIMB 12804 / NRRL 8165 / MA-4680).